Reading from the N-terminus, the 93-residue chain is Small ribosomal subunit protein uS19 (93 aa).

Belongs to the universal ribosomal protein uS19 family.

In terms of biological role, protein S19 forms a complex with S13 that binds strongly to the 16S ribosomal RNA. This chain is Small ribosomal subunit protein uS19, found in Brevibacillus brevis (strain 47 / JCM 6285 / NBRC 100599).